The primary structure comprises 200 residues: Putative hydrolase MhqD (200 aa).

Active-site charge relay system residues include Ser-100, Asp-150, and His-181.

This sequence belongs to the AB hydrolase superfamily. AB hydrolase 2 family.

It localises to the cytoplasm. Its function is as follows. Putative hydrolase that may contribute to the degradation of aromatic compounds. The chain is Putative hydrolase MhqD (mhqD) from Bacillus subtilis (strain 168).